The chain runs to 114 residues: Reprimo-like protein (114 aa).

A helical membrane pass occupies residues 61–81 (VVQIAVLCVLSLTVMFGIFFL).

It belongs to the reprimo family.

It localises to the membrane. The sequence is that of Reprimo-like protein (rprml) from Danio rerio (Zebrafish).